Consider the following 683-residue polypeptide: DNA ligase 2 (683 aa).

NAD(+) is bound by residues 27 to 31 (DGEFD), 76 to 77 (SL), and Glu-106. Residue Lys-108 is the N6-AMP-lysine intermediate of the active site. Residues Arg-129, Glu-169, Lys-285, and Lys-309 each coordinate NAD(+). Cys-403, Cys-406, Cys-422, and Cys-428 together coordinate Zn(2+). Residues 592 to 681 (SIERTLEGLS…PAAVAAEEPE (90 aa)) enclose the BRCT domain.

Belongs to the NAD-dependent DNA ligase family. LigA subfamily. The cofactor is Mg(2+). Mn(2+) is required as a cofactor.

The enzyme catalyses NAD(+) + (deoxyribonucleotide)n-3'-hydroxyl + 5'-phospho-(deoxyribonucleotide)m = (deoxyribonucleotide)n+m + AMP + beta-nicotinamide D-nucleotide.. Functionally, DNA ligase that catalyzes the formation of phosphodiester linkages between 5'-phosphoryl and 3'-hydroxyl groups in double-stranded DNA using NAD as a coenzyme and as the energy source for the reaction. It is essential for DNA replication and repair of damaged DNA. This is DNA ligase 2 from Nocardia farcinica (strain IFM 10152).